Here is a 1363-residue protein sequence, read N- to C-terminus: Spike glycoprotein (1363 aa).

The first 13 residues, Met-1–Leu-13, serve as a signal peptide directing secretion. Residues Ala-14–Pro-1307 are Extracellular-facing. The BetaCoV S1-NTD domain occupies Val-15–Thr-298. 5 disulfides stabilise this stretch: Cys-21–Cys-165, Cys-160–Cys-193, Cys-172–Cys-252, Cys-286–Cys-296, and Cys-331–Cys-356. Asn-59 and Asn-133 each carry an N-linked (GlcNAc...) asparagine; by host glycan. Residue Asn-198 is glycosylated (N-linked (GlcNAc...) asparagine; by host). The 289-residue stretch at Pro-329–Thr-617 folds into the BetaCoV S1-CTD domain. Residue Asn-359 is glycosylated (N-linked (GlcNAc...) asparagine; by host). Disulfide bonds link Cys-374–Cys-427 and Cys-386–Cys-615. Residues Asn-437, Asn-649, Asn-676, Asn-696, Asn-714, Asn-739, and Asn-788 are each glycosylated (N-linked (GlcNAc...) asparagine; by host). Fusion peptide stretches follow at residues Ser-914–Tyr-935 and Glu-933–Tyr-953. N-linked (GlcNAc...) asparagine; by host glycosylation is present at Asn-937. The cysteines at positions 938 and 949 are disulfide-linked. A heptad repeat 1 region spans residues Gln-1014–Phe-1064. The stretch at Gln-1043–Ile-1087 forms a coiled coil. Residues Asn-1194, Asn-1224, Asn-1234, Asn-1253, Asn-1267, and Asn-1288 are each glycosylated (N-linked (GlcNAc...) asparagine; by host). A heptad repeat 2 region spans residues Ala-1258 to Asp-1296. Residues Thr-1269–Ile-1297 are a coiled coil. The helical transmembrane segment at Trp-1308–Ile-1328 threads the bilayer. Residues Cys-1329–Asp-1363 lie on the Cytoplasmic side of the membrane. Positions Thr-1359–Asp-1363 match the KxHxx motif.

It belongs to the betacoronaviruses spike protein family. As to quaternary structure, homotrimer; each monomer consists of a S1 and a S2 subunit. The resulting peplomers protrude from the virus surface as spikes. Post-translationally, specific enzymatic cleavages in vivo yield mature proteins. The precursor is processed into S1 and S2 by host cell furin or another cellular protease to yield the mature S1 and S2 proteins. Additionally, a second cleavage leads to the release of a fusion peptide after viral attachment to host cell receptor. The cytoplasmic Cys-rich domain is palmitoylated. Spike glycoprotein is digested within host endosomes.

The protein localises to the virion membrane. The protein resides in the host endoplasmic reticulum-Golgi intermediate compartment membrane. It localises to the host cell membrane. Functionally, attaches the virion to the cell membrane by interacting with host receptor, initiating the infection. Its function is as follows. Mediates fusion of the virion and cellular membranes by acting as a class I viral fusion protein. Under the current model, the protein has at least three conformational states: pre-fusion native state, pre-hairpin intermediate state, and post-fusion hairpin state. During viral and target cell membrane fusion, the coiled coil regions (heptad repeats) assume a trimer-of-hairpins structure, positioning the fusion peptide in close proximity to the C-terminal region of the ectodomain. The formation of this structure appears to drive apposition and subsequent fusion of viral and target cell membranes. Acts as a viral fusion peptide which is unmasked following S2 cleavage occurring upon virus endocytosis. The sequence is that of Spike glycoprotein from Bos taurus (Bovine).